The sequence spans 367 residues: Isoflavone 4'-O-methyltransferase (367 aa).

Residues 209-212 (VGGG), Asp233, 233-234 (DQ), 253-254 (DM), and Lys267 each bind S-adenosyl-L-methionine. Catalysis depends on His271, which acts as the Proton acceptor.

Belongs to the class I-like SAM-binding methyltransferase superfamily. Cation-independent O-methyltransferase family. COMT subfamily.

It carries out the reaction a 4'-hydroxyisoflavone + S-adenosyl-L-methionine = a 4'-methoxyisoflavone + S-adenosyl-L-homocysteine + H(+). The catalysed reaction is (2R,3S)-2,4',7-trihydroxyisoflavanone + S-adenosyl-L-methionine = (2R,3S)-2,7-dihydroxy-4'-methoxyisoflavanone + S-adenosyl-L-homocysteine + H(+). Its function is as follows. 2-hydroxyisoflavanone 4'-O-methyltransferase involved in the biosynthesis of formononetin. Can use 2,7,4'-trihydroxyisoflavanone, (+)-6a-hydroxymaackiain or medicarpin as substrate, but not daidzein or (-)-6a-hydroxymaackiain. In Glycyrrhiza echinata (Licorice), this protein is Isoflavone 4'-O-methyltransferase (HI4'OMT).